A 111-amino-acid chain; its full sequence is uncharacterized protein (111 aa).

The protein belongs to the asfivirus E111R family.

This is an uncharacterized protein from African swine fever virus (strain Badajoz 1971 Vero-adapted) (Ba71V).